Consider the following 340-residue polypeptide: Short-chain dehydrogenase/reductase prx1 (340 aa).

Residues Ile-60, Lys-84, Asp-104, Asn-131, and Lys-162 each contribute to the NADP(+) site. The Proton donor role is filled by Ser-184. 2 residues coordinate NADP(+): Tyr-210 and Lys-214. The active-site Proton acceptor is Tyr-210. Lys-214 (lowers pKa of active site Tyr) is an active-site residue.

It belongs to the short-chain dehydrogenases/reductases (SDR) family.

Its pathway is sesquiterpene biosynthesis. Functionally, short-chain dehydrogenase/reductase; part of the gene cluster that mediates the biosynthesis of PR-toxin, a bicyclic sesquiterpene belonging to the eremophilane class and acting as a mycotoxin. The first step of the pathway is catalyzed by the aristolochene synthase which performs the cyclization of trans,trans-farnesyl diphosphate (FPP) to the bicyclic sesquiterpene aristolochene. Following the formation of aristolochene, the non-oxygenated aristolochene is converted to the trioxygenated intermediate eremofortin B, via 7-epi-neopetasone. This conversion appears to involve three enzymes, a hydroxysterol oxidase-like enzyme, the quinone-oxidase prx3 that forms the quinone-type-structure in the bicyclic nucleus of aristolochene with the C8-oxo group and the C-3 hydroxyl group, and the P450 monooxygenase prx9 that introduces the epoxide at the double bond between carbons 1 and 2. No monoxy or dioxy-intermediates have been reported to be released to the broth, so these three early oxidative reactions may be coupled together. Eremofortin B is further oxidized by another P450 monooxygenase, that introduces a second epoxide between carbons 7 and 11 prior to acetylation to eremofortin A by the acetyltransferase prx11. The second epoxidation may be performed by a second P450 monooxygenase. After the acetylation step, eremofortin A is converted to eremofortin C and then to PR-toxin. First the conversion of eremofortin A to eremofortin C proceeds by oxidation of the side chain of the molecule at C-12 and is catalyzed by the short-chain oxidoreductase prx1. The cytochrome P450 monooxygenase prx8 also plays a role in this step. The primary alcohol formed at C-12 is finally oxidized by the short-chain alcohol dehydrogenase prx4 that forms PR-toxin. The protein is Short-chain dehydrogenase/reductase prx1 of Penicillium rubens (strain ATCC 28089 / DSM 1075 / NRRL 1951 / Wisconsin 54-1255) (Penicillium chrysogenum).